The primary structure comprises 431 residues: Mitochondrial inner membrane protein OXA1-like (431 aa).

The N-terminal 22 residues, 1–22 (MATCLRGITKRVNLLQRRVYPS), are a transit peptide targeting the mitochondrion. 5 helical membrane passes run 119 to 139 (VVPA…PVAA), 155 to 175 (WWAS…PILL), 227 to 247 (FTPL…FFAI), 269 to 289 (TTTD…LIMV), and 312 to 332 (IIAF…FCYW). The disordered stretch occupies residues 362–414 (NSSTRQPSPSSPLPFSFAEPKDQSVVAQEKPPMSSESSSSVPDRRISRSSVLN). Positions 392 to 402 (PPMSSESSSSV) are enriched in low complexity.

Belongs to the OXA1/ALB3/YidC (TC 2.A.9.2) family.

The protein resides in the mitochondrion inner membrane. In terms of biological role, probably required for the insertion of integral membrane proteins into the mitochondrial inner membrane. May participate in the activity and assembly of cytochrome oxidase. This is Mitochondrial inner membrane protein OXA1-like (OXA1L) from Arabidopsis thaliana (Mouse-ear cress).